Consider the following 288-residue polypeptide: ATP synthase gamma chain (288 aa).

Belongs to the ATPase gamma chain family. As to quaternary structure, F-type ATPases have 2 components, CF(1) - the catalytic core - and CF(0) - the membrane proton channel. CF(1) has five subunits: alpha(3), beta(3), gamma(1), delta(1), epsilon(1). CF(0) has three main subunits: a, b and c.

The protein localises to the cell inner membrane. Functionally, produces ATP from ADP in the presence of a proton gradient across the membrane. The gamma chain is believed to be important in regulating ATPase activity and the flow of protons through the CF(0) complex. The chain is ATP synthase gamma chain from Rickettsia typhi (strain ATCC VR-144 / Wilmington).